Here is a 116-residue protein sequence, read N- to C-terminus: UPF0102 protein Neut_1662 (116 aa).

This sequence belongs to the UPF0102 family.

The protein is UPF0102 protein Neut_1662 of Nitrosomonas eutropha (strain DSM 101675 / C91 / Nm57).